The chain runs to 492 residues: Peptidyl-prolyl cis-trans isomerase-like 4 (492 aa).

The PPIase cyclophilin-type domain maps to 1-161 (MAVLLETTLG…QDIRINHTVI (161 aa)). Positions 167–188 (DDPPDLLIPDRSPEPTKEQLDS) are disordered. Positions 177 to 187 (RSPEPTKEQLD) are enriched in basic and acidic residues. Ser178 carries the post-translational modification Phosphoserine. Thr182 carries the post-translational modification Phosphothreonine. Residues Lys201, Lys212, and Lys218 each participate in a glycyl lysine isopeptide (Lys-Gly) (interchain with G-Cter in SUMO2) cross-link. One can recognise an RRM domain in the interval 240-318 (NVLFVCKLNP…RRIHVDFSQS (79 aa)). Glycyl lysine isopeptide (Lys-Gly) (interchain with G-Cter in SUMO2) cross-links involve residues Lys321 and Lys362. Disordered regions lie at residues 368–409 (DEQG…NPNQ) and 423–492 (EESC…SKYR). The span at 377–390 (SHSHTSKKHKKKTR) shows a compositional bias: basic residues. A Phosphoserine modification is found at Ser393. A Glycyl lysine isopeptide (Lys-Gly) (interchain with G-Cter in SUMO2) cross-link involves residue Lys405. Basic and acidic residues predominate over residues 426 to 436 (CWEKQKNEKRD). A Glycyl lysine isopeptide (Lys-Gly) (interchain with G-Cter in SUMO2) cross-link involves residue Lys460. Ser471 is modified (phosphoserine). Residues 473–485 (KRDRSRSPKKSKA) show a composition bias toward basic residues.

This sequence belongs to the cyclophilin-type PPIase family. PPIL4 subfamily.

The protein localises to the nucleus. It catalyses the reaction [protein]-peptidylproline (omega=180) = [protein]-peptidylproline (omega=0). Its function is as follows. PPIases accelerate the folding of proteins. It catalyzes the cis-trans isomerization of proline imidic peptide bonds in oligopeptides. In Mus musculus (Mouse), this protein is Peptidyl-prolyl cis-trans isomerase-like 4 (Ppil4).